The following is a 775-amino-acid chain: 5-methyltetrahydropteroyltriglutamate--homocysteine methyltransferase (775 aa).

5-methyltetrahydropteroyltri-L-glutamate contacts are provided by residues 16–19 (REMK) and lysine 115. Residues 435 to 437 (IGS) and glutamate 488 each bind L-homocysteine. Residues 435–437 (IGS) and glutamate 488 each bind L-methionine. Residues 519–520 (RC) and tryptophan 565 each bind 5-methyltetrahydropteroyltri-L-glutamate. Position 603 (aspartate 603) interacts with L-homocysteine. Residue aspartate 603 coordinates L-methionine. Position 609 (glutamate 609) interacts with 5-methyltetrahydropteroyltri-L-glutamate. Zn(2+) is bound by residues histidine 645, cysteine 647, and glutamate 669. The Proton donor role is filled by histidine 698. Cysteine 730 is a Zn(2+) binding site.

This sequence belongs to the vitamin-B12 independent methionine synthase family. It depends on Zn(2+) as a cofactor.

The enzyme catalyses 5-methyltetrahydropteroyltri-L-glutamate + L-homocysteine = tetrahydropteroyltri-L-glutamate + L-methionine. It functions in the pathway amino-acid biosynthesis; L-methionine biosynthesis via de novo pathway; L-methionine from L-homocysteine (MetE route): step 1/1. In terms of biological role, catalyzes the transfer of a methyl group from 5-methyltetrahydrofolate to homocysteine resulting in methionine formation. The chain is 5-methyltetrahydropteroyltriglutamate--homocysteine methyltransferase from Coxiella burnetii (strain CbuK_Q154) (Coxiella burnetii (strain Q154)).